A 726-amino-acid polypeptide reads, in one-letter code: Catalase-peroxidase (726 aa).

Residues 1–33 (MSTTDDTHNTLSAGKCPFHQGGHDRSAGAGTAS) form a disordered region. The tryptophyl-tyrosyl-methioninium (Trp-Tyr) (with M-252) cross-link spans 105–226 (WHGAGTYRSI…LGATEMGLIY (122 aa)). The active-site Proton acceptor is the His-106. A cross-link (tryptophyl-tyrosyl-methioninium (Tyr-Met) (with W-105)) is located at residues 226–252 (YVNPEGPDHSGEPLSAAAAIRATFGNM). His-267 provides a ligand contact to heme b.

Belongs to the peroxidase family. Peroxidase/catalase subfamily. As to quaternary structure, homodimer or homotetramer. It depends on heme b as a cofactor. In terms of processing, formation of the three residue Trp-Tyr-Met cross-link is important for the catalase, but not the peroxidase activity of the enzyme.

The enzyme catalyses H2O2 + AH2 = A + 2 H2O. It catalyses the reaction 2 H2O2 = O2 + 2 H2O. In terms of biological role, bifunctional enzyme with both catalase and broad-spectrum peroxidase activity. The protein is Catalase-peroxidase of Salmonella arizonae (strain ATCC BAA-731 / CDC346-86 / RSK2980).